Here is a 329-residue protein sequence, read N- to C-terminus: 4-diphosphocytidyl-2-C-methyl-D-erythritol kinase (329 aa).

The active site involves Lys-14. 117-127 (PSGAGMGGASS) contributes to the ATP binding site. The active site involves Asp-166.

It belongs to the GHMP kinase family. IspE subfamily.

It catalyses the reaction 4-CDP-2-C-methyl-D-erythritol + ATP = 4-CDP-2-C-methyl-D-erythritol 2-phosphate + ADP + H(+). Its pathway is isoprenoid biosynthesis; isopentenyl diphosphate biosynthesis via DXP pathway; isopentenyl diphosphate from 1-deoxy-D-xylulose 5-phosphate: step 3/6. Its function is as follows. Catalyzes the phosphorylation of the position 2 hydroxy group of 4-diphosphocytidyl-2C-methyl-D-erythritol. The polypeptide is 4-diphosphocytidyl-2-C-methyl-D-erythritol kinase (Rhodopirellula baltica (strain DSM 10527 / NCIMB 13988 / SH1)).